A 688-amino-acid chain; its full sequence is Hid-1 family protein P19A11.07c (688 aa).

This sequence belongs to the hid-1 family.

Its subcellular location is the cytoplasm. It is found in the nucleus. The chain is Hid-1 family protein P19A11.07c from Schizosaccharomyces pombe (strain 972 / ATCC 24843) (Fission yeast).